Reading from the N-terminus, the 293-residue chain is 4-hydroxy-tetrahydrodipicolinate synthase (293 aa).

Pyruvate is bound at residue T47. The active-site Proton donor/acceptor is Y136. The Schiff-base intermediate with substrate role is filled by K164. I206 lines the pyruvate pocket.

Belongs to the DapA family. Homotetramer; dimer of dimers.

It is found in the cytoplasm. The catalysed reaction is L-aspartate 4-semialdehyde + pyruvate = (2S,4S)-4-hydroxy-2,3,4,5-tetrahydrodipicolinate + H2O + H(+). It functions in the pathway amino-acid biosynthesis; L-lysine biosynthesis via DAP pathway; (S)-tetrahydrodipicolinate from L-aspartate: step 3/4. Its function is as follows. Catalyzes the condensation of (S)-aspartate-beta-semialdehyde [(S)-ASA] and pyruvate to 4-hydroxy-tetrahydrodipicolinate (HTPA). The chain is 4-hydroxy-tetrahydrodipicolinate synthase from Listeria welshimeri serovar 6b (strain ATCC 35897 / DSM 20650 / CCUG 15529 / CIP 8149 / NCTC 11857 / SLCC 5334 / V8).